The chain runs to 130 residues: Transcription antitermination protein NusB (130 aa).

Belongs to the NusB family.

In terms of biological role, involved in transcription antitermination. Required for transcription of ribosomal RNA (rRNA) genes. Binds specifically to the boxA antiterminator sequence of the ribosomal RNA (rrn) operons. The polypeptide is Transcription antitermination protein NusB (Bacillus velezensis (strain DSM 23117 / BGSC 10A6 / LMG 26770 / FZB42) (Bacillus amyloliquefaciens subsp. plantarum)).